Reading from the N-terminus, the 527-residue chain is Light-independent protochlorophyllide reductase subunit B (527 aa).

Residue D36 participates in [4Fe-4S] cluster binding. D290 functions as the Proton donor in the catalytic mechanism. 425–426 (GL) is a binding site for substrate.

It belongs to the ChlB/BchB/BchZ family. As to quaternary structure, protochlorophyllide reductase is composed of three subunits; ChlL, ChlN and ChlB. Forms a heterotetramer of two ChlB and two ChlN subunits. It depends on [4Fe-4S] cluster as a cofactor.

It carries out the reaction chlorophyllide a + oxidized 2[4Fe-4S]-[ferredoxin] + 2 ADP + 2 phosphate = protochlorophyllide a + reduced 2[4Fe-4S]-[ferredoxin] + 2 ATP + 2 H2O. It functions in the pathway porphyrin-containing compound metabolism; chlorophyll biosynthesis (light-independent). Its function is as follows. Component of the dark-operative protochlorophyllide reductase (DPOR) that uses Mg-ATP and reduced ferredoxin to reduce ring D of protochlorophyllide (Pchlide) to form chlorophyllide a (Chlide). This reaction is light-independent. The NB-protein (ChlN-ChlB) is the catalytic component of the complex. This Synechococcus sp. (strain RCC307) protein is Light-independent protochlorophyllide reductase subunit B.